The chain runs to 367 residues: DNA polymerase IV (367 aa).

The region spanning 14 to 198 (IIHIDMDAFF…LPIAKFHGVG (185 aa)) is the UmuC domain. Mg(2+) contacts are provided by Asp-18 and Asp-116. Residue Glu-117 is part of the active site.

This sequence belongs to the DNA polymerase type-Y family. In terms of assembly, monomer. Mg(2+) serves as cofactor.

It is found in the cytoplasm. The catalysed reaction is DNA(n) + a 2'-deoxyribonucleoside 5'-triphosphate = DNA(n+1) + diphosphate. Functionally, poorly processive, error-prone DNA polymerase involved in untargeted mutagenesis. Copies undamaged DNA at stalled replication forks, which arise in vivo from mismatched or misaligned primer ends. These misaligned primers can be extended by PolIV. Exhibits no 3'-5' exonuclease (proofreading) activity. May be involved in translesional synthesis, in conjunction with the beta clamp from PolIII. The sequence is that of DNA polymerase IV from Streptococcus thermophilus (strain ATCC BAA-491 / LMD-9).